The primary structure comprises 401 residues: Alkane 1-monooxygenase (401 aa).

At 1 to 20 (MLEKHRVLDSAPEYVDKKKY) the chain is on the cytoplasmic side. Residues 21-39 (LWILSTLWPATPMIGIWLA) traverse the membrane as a helical segment. Topologically, residues 40-41 (NE) are periplasmic. The helical transmembrane segment at 42-62 (TGWGIFYGLVLLVWYGALPLL) threads the bilayer. At 63–88 (DAMFGEDFNNPPEEVVPKLEKERYYR) the chain is on the cytoplasmic side. The helical transmembrane segment at 89–111 (VLTYLTVPMHYAALIVSAWWVGT) threads the bilayer. Topologically, residues 112 to 113 (QP) are periplasmic. A helical transmembrane segment spans residues 114 to 134 (MSWLEIGALALSLGIVNGLAL). Residues 135-228 (NTGHELGHKK…QSVWSFDNEI (94 aa)) are Cytoplasmic-facing. Positions 138, 142, 168, 172, and 173 each coordinate Fe cation. A helical membrane pass occupies residues 229-249 (LQPMIITVILYAVLLALFGPK). A topological domain (periplasmic) is located at residue Met-250. The chain crosses the membrane as a helical span at residues 251–270 (LVFLPIQMAFGWWQLTSANY). Residues 271–401 (IEHYGLLRQK…HSSSTSAVAS (131 aa)) lie on the Cytoplasmic side of the membrane. 3 residues coordinate Fe cation: His-312, His-315, and His-316.

This sequence belongs to the fatty acid desaturase type 1 family. AlkB subfamily. The cofactor is Fe(3+).

The protein localises to the cell inner membrane. The catalysed reaction is octane + 2 reduced [rubredoxin] + O2 + 2 H(+) = 2 oxidized [rubredoxin] + octan-1-ol + H2O. It functions in the pathway hydrocarbon metabolism; alkane degradation. In terms of biological role, catalyzes the hydroxylation of n-alkanes and fatty acids in the presence of a NADH-rubredoxin reductase and rubredoxin. The chain is Alkane 1-monooxygenase (alkB) from Ectopseudomonas oleovorans (Pseudomonas oleovorans).